Consider the following 1668-residue polypeptide: MAGQGDCCVKVAVRIRPQLSKEKIEGCHICTSVTPGEPQVLLGKDKAFTYDFVFDLDTWQEQIYSTCVSKLIEGCFEGYNATVLAYGQTGAGKTYTMGTGFDTVTSEEEQGIIPRAIAHLFRGIDERKRRAQEKGVTGPEFKVSAQFLELYNEEILDLFDSTRDPDARHRRSNIKIHEDANGGIYTTGVTSRLINSQEELIQCLKQGALSRTTASTQMNVQSSRSHAIFTIHLCQMRVCAQPDLVNETVTGLPDGAAPTGTEYETLTAKFHFVDLAGSERLKRTGATGERAKEGISINCGLLALGNVISALGDQSKKVVHVPYRDSKLTRLLQDSLGGNSQTIMIACVSPSDRDFMETLNTLKYANRARNIKNKVVVNQDKTSQQISALRAEIARLQMELMEYKAGKRVIGEDGTEGYSDLFRENAMLQKENGALRLRVKAMQEAIDAINNRVTQLMSQEANLLLAKAGDGNEAIGALIQNYIREIEELRTKLLESEAMNESLRRSLSRASARNPYSLGASPAGPAFGGSPATSMEDASEVIRKAKQDLERLKKKEVRQRRKSPEKEAFKKRAKLQAENSEETDENEAEEEEEERDESGCEEEEGREDEDEDSGSEESLVDSDSDPEEKEVNFQADLADLTCEIEIKQKLIDELENSQRRLQTLKHQYEEKLILLQNKIRDTQLERDRVLQNLSTMECYTEEKANKIKADYEKRLREMNRDLQKLQAAQKEHARLLKNQSRYERELKKLQAEVAEMKKAKVALMKQMREEQQRRRLVETKRNREIAQLKKEQRRQEFQIRALESQKRQQEIVLRRKTQEVSALRRLAKPMSERVAGRVGLKPPNMDSGAEVSASTTSSEAESGARSVSSIVRQWNRKIDHFLGDRPTATVNGGRPARKKFQKKGASQSFSKAARLKWQSLERRIIDIVMQRMTIVNLEADMERLIKKREELFLLQEALRRKREHLQAESPEEEKGLQELAEEIEVLAANIDYINDSITDCQATIVQLEETKEELDSTDTSVVISSCSLAEARLLLDNFLKASIDKGLQVAQKEAQIRLLEGRLRQTDMTGSSQNHLLLDALREKAEAHPELQALIYNVQHENGYASTDEEVSEFSEGSFSQSFTMKGSTSHDDFKFKGEPKLSAQMKAVSAECLGPPLDSSTKNITKSLASLVEIKEDGVGFSIRDPYYRDKVSRTVSLPTRGSTFPRQSRGATDTSPLTRRKSYDRGQPIRSTDMGFTPPSSPPTRPRNDRNVFSRLTSNQSQGSALDKSDDSDSSLSEVLRGIITPIGGAKGARTAPLQCISMAEGHTKPILCLDATDELLFTGSKDRSCKMWNLVTGQEIAALKGHPNNVVSIKYCSHSGLVFSVSSSYIKVWDIRDSAKCIRTLTSSGQVISGDACIATSTRAITSAQGEHQINQMALSPSGSMLYVASGNAVRIWELNRFQPIGKLTGHIGPVMCLTVTQTSNQHDLVVTGSKDHYVKMFQLGDCVTGTIGPTHNFEPPHYDGIECLAIQGDILFSGSRDNGIKKWDLDQQELIQQIPNAHKDWVCALAFVPGRPMLLSACRAGFIKVWNVDNFTPIGEIKGHDSPINAICTNSKHIFTASSDCRVKLWNYVPGLTPCLPRRVLAIKGRAPPCPDLPPPPLTLPILPFPVFPPPRSELLLHVT.

A Kinesin motor domain is found at 8–371 (CVKVAVRIRP…LKYANRARNI (364 aa)). 87–94 (GQTGAGKT) serves as a coordination point for ATP. Residues 372–465 (KNKVVVNQDK…LMSQEANLLL (94 aa)) are a coiled coil. The segment at 401-1100 (MEYKAGKRVI…LQALIYNVQH (700 aa)) is interaction with TRIM3. 2 disordered regions span residues 553-629 (KKKE…PEEK) and 837-866 (RVGL…GARS). The segment covering 579–628 (NSEETDENEAEEEEEERDESGCEEEEGREDEDEDSGSEESLVDSDSDPEE) has biased composition (acidic residues). At S580 the chain carries Phosphoserine. T583 is subject to Phosphothreonine. A compositionally biased stretch (low complexity) spans 847-866 (SGAEVSASTTSSEAESGARS). The stretch at 924–1019 (IIDIVMQRMT…TKEELDSTDT (96 aa)) forms a coiled coil. Phosphoserine occurs at positions 1150, 1168, and 1217. Residues 1199–1219 (LPTRGSTFPRQSRGATDTSPL) show a composition bias toward polar residues. Positions 1199-1253 (LPTRGSTFPRQSRGATDTSPLTRRKSYDRGQPIRSTDMGFTPPSSPPTRPRNDRN) are disordered. Phosphothreonine is present on T1239. S1243 is subject to Phosphoserine. 7 WD repeats span residues 1308–1345 (GHTK…EIAA), 1348–1386 (GHPN…KCIR), 1412–1450 (QGEH…PIGK), 1453–1495 (GHIG…TGTI), 1504–1541 (PHYD…LIQQ), 1545–1584 (AHKD…PIGE), and 1587–1624 (GHDS…TPCL).

The protein belongs to the TRAFAC class myosin-kinesin ATPase superfamily. Kinesin family. Interacts with TRIM3; the interaction positively affects motility of KIF21B. Interacts with GABARAP and GABA(A) receptor subunits: GABRG2, GABRA1 and GABRA2. May interact with GABA(A) receptor subunits: GABRB2 and GABRB3. As to expression, expressed in brain (at protein level). Expressed in spleen and at lower levels in testes.

The protein resides in the cytoplasm. It localises to the cytoskeleton. The protein localises to the cell projection. It is found in the dendrite. Its subcellular location is the growth cone. The protein resides in the axon. It localises to the cytoplasmic vesicle. In terms of biological role, plus-end directed microtubule-dependent motor protein which displays processive activity. Is involved in regulation of microtubule dynamics, synapse function and neuronal morphology, including dendritic tree branching and spine formation. Plays a role in lerning and memory. Involved in delivery of gamma-aminobutyric acid (GABA(A)) receptor to cell surface. The polypeptide is Kinesin-like protein KIF21B (Kif21b) (Mus musculus (Mouse)).